The chain runs to 224 residues: UPF0758 protein Patl_0046 (224 aa).

The 123-residue stretch at 102-224 (VFNSAQQTKH…AVSFAERGLI (123 aa)) folds into the MPN domain. Residues His-173, His-175, and Asp-186 each coordinate Zn(2+). A JAMM motif motif is present at residues 173-186 (HNHPSGVAEPSQAD).

Belongs to the UPF0758 family.

The chain is UPF0758 protein Patl_0046 from Pseudoalteromonas atlantica (strain T6c / ATCC BAA-1087).